A 79-amino-acid chain; its full sequence is Small ribosomal subunit protein bS18 (79 aa).

This sequence belongs to the bacterial ribosomal protein bS18 family. As to quaternary structure, part of the 30S ribosomal subunit. Forms a tight heterodimer with protein bS6.

Its function is as follows. Binds as a heterodimer with protein bS6 to the central domain of the 16S rRNA, where it helps stabilize the platform of the 30S subunit. This chain is Small ribosomal subunit protein bS18, found in Afipia carboxidovorans (strain ATCC 49405 / DSM 1227 / KCTC 32145 / OM5) (Oligotropha carboxidovorans).